Reading from the N-terminus, the 409-residue chain is PPE family protein PPE32 (409 aa).

It belongs to the mycobacterial PPE family. Interacts with host Toll-like receptor 2 (TLR2).

It is found in the secreted. The protein resides in the cell wall. Its subcellular location is the cell surface. In terms of biological role, virulence factor that modulates the production of host cytokines. The polypeptide is PPE family protein PPE32 (Mycobacterium tuberculosis (strain CDC 1551 / Oshkosh)).